The chain runs to 383 residues: Gamma-butyrobetaine dioxygenase (383 aa).

Residues Cys46, Cys48, Cys51, and His91 each coordinate Zn(2+). 3 residues coordinate Fe cation: His209, Asp211, and His350.

The protein belongs to the gamma-BBH/TMLD family. Homodimer. Fe(2+) serves as cofactor. It depends on L-ascorbate as a cofactor.

The protein resides in the cytoplasm. It catalyses the reaction 4-(trimethylamino)butanoate + 2-oxoglutarate + O2 = carnitine + succinate + CO2. It participates in amine and polyamine biosynthesis; carnitine biosynthesis. Its function is as follows. Catalyzes the formation of L-carnitine from gamma-butyrobetaine. This chain is Gamma-butyrobetaine dioxygenase, found in Pseudomonas sp. (strain AK-1).